A 326-amino-acid polypeptide reads, in one-letter code: uncharacterized protein (326 aa).

S132 is a binding site for substrate. Y157 functions as the Proton acceptor in the catalytic mechanism.

Belongs to the NAD(P)-dependent epimerase/dehydratase family. dTDP-glucose dehydratase subfamily.

This is an uncharacterized protein from Methanocaldococcus jannaschii (strain ATCC 43067 / DSM 2661 / JAL-1 / JCM 10045 / NBRC 100440) (Methanococcus jannaschii).